The sequence spans 340 residues: Conidiation-specific protein 13 (340 aa).

Residues 313–340 (AEAAAGISSGKPAADRKTKGKKGTKFRV) form a disordered region. A compositionally biased stretch (basic residues) spans 330 to 340 (TKGKKGTKFRV).

The protein is Conidiation-specific protein 13 (con-13) of Neurospora crassa (strain ATCC 24698 / 74-OR23-1A / CBS 708.71 / DSM 1257 / FGSC 987).